The chain runs to 219 residues: Large ribosomal subunit protein bL25 (219 aa).

Residues 176 to 219 form a disordered region; that stretch reads VTVVPPTDEPSEEEVEAMEGESATEEPEVVDEDKEDDEEENKED. The span at 184 to 219 shows a compositional bias: acidic residues; that stretch reads EPSEEEVEAMEGESATEEPEVVDEDKEDDEEENKED.

Belongs to the bacterial ribosomal protein bL25 family. CTC subfamily. Part of the 50S ribosomal subunit; part of the 5S rRNA/L5/L18/L25 subcomplex. Contacts the 5S rRNA. Binds to the 5S rRNA independently of L5 and L18.

This is one of the proteins that binds to the 5S RNA in the ribosome where it forms part of the central protuberance. The sequence is that of Large ribosomal subunit protein bL25 from Staphylococcus epidermidis (strain ATCC 12228 / FDA PCI 1200).